The following is a 470-amino-acid chain: MIKIYNTLTREKEVFTPIEARKVRMYVCGPTVYNYIHIGNARSAIAFDTIRRYFEYRGYEVNYVSNFTDVDDKIIKAAKELKITAPEVAERFIKAFEEDTQALNVQPATLHPRVMDHMPDILAFIEVLIEKGFAYEVAGDVYYRTRKFPNYGKLSHQSIDELEVGASQRTGVEQQLKEDPLDFALWKSAKEDEISWDSPWGKGRPGWHIECSVMATKHLEETIDIHGGGQDLEFPHHENEIAQSEAKTGHTFANYWMHNGYVTIGEDDEKMSKSLGNFITVHEMIQKVDPQILRFFMSTTQYRRPIRYSESTLKEAAANYQKLKNAFENLRFRQADAVASLPEDEHYLAQLNELEQRFITEMDDDFNAANGITVVYELAKMMNQYSEQATVSEPVLVAMDKLFSGWLAIFGLFFKNEELVDAQVDALIEERNQARKDRDFARSDEIRDLLKEQGIVLEDTPQGTRWRRSE.

Cysteine 28 contacts Zn(2+). The 'HIGH' region motif lies at 30-40; that stretch reads PTVYNYIHIGN. Residues cysteine 211, histidine 236, and glutamate 240 each contribute to the Zn(2+) site. Positions 270–274 match the 'KMSKS' region motif; it reads KMSKS. An ATP-binding site is contributed by lysine 273.

Belongs to the class-I aminoacyl-tRNA synthetase family. Monomer. Zn(2+) is required as a cofactor.

The protein resides in the cytoplasm. The catalysed reaction is tRNA(Cys) + L-cysteine + ATP = L-cysteinyl-tRNA(Cys) + AMP + diphosphate. In Enterococcus faecalis (strain ATCC 700802 / V583), this protein is Cysteine--tRNA ligase.